The following is a 178-amino-acid chain: TM2 domain-containing protein biscotti (178 aa).

An N-terminal signal peptide occupies residues 1–18; that stretch reads MFPVLLLLLFFFAKETHQ. Residues 19 to 99 lie on the Extracellular side of the membrane; that stretch reads INVDCNELQM…YHLDTTLLLS (81 aa). 2 N-linked (GlcNAc...) asparagine glycosylation sites follow: asparagine 69 and asparagine 75. The TM2 domain maps to 94 to 137; the sequence is TTLLLSVFLGMFGVDRFYLGYPGIGLLKFCTLGGMFLGQLIDIV. Residues 100-120 form a helical membrane-spanning segment; it reads VFLGMFGVDRFYLGYPGIGLL. Topologically, residues 121 to 124 are cytoplasmic; the sequence is KFCT. A helical membrane pass occupies residues 125 to 145; that stretch reads LGGMFLGQLIDIVLIALQVVG. Residues 146–178 are Extracellular-facing; that stretch reads PADGSAYVIPYYGAGIHIVRSDNTTYRLPRDDW. An N-linked (GlcNAc...) asparagine glycan is attached at asparagine 168.

The protein belongs to the TM2 family.

The protein localises to the membrane. Functionally, positive regulator of Notch signaling. Maternal neurogenic factor involved in Notch signaling-dependent neuroectodermal specification during early embryogenesis. Functions cooperatively with amx/TM2D3 and amrt/TM2D2. This is TM2 domain-containing protein biscotti from Drosophila melanogaster (Fruit fly).